The chain runs to 164 residues: Crossover junction endodeoxyribonuclease RuvC (164 aa).

Catalysis depends on residues Asp7, Glu67, and Asp140. Mg(2+)-binding residues include Asp7, Glu67, and Asp140.

Belongs to the RuvC family. As to quaternary structure, homodimer which binds Holliday junction (HJ) DNA. The HJ becomes 2-fold symmetrical on binding to RuvC with unstacked arms; it has a different conformation from HJ DNA in complex with RuvA. In the full resolvosome a probable DNA-RuvA(4)-RuvB(12)-RuvC(2) complex forms which resolves the HJ. The cofactor is Mg(2+).

It is found in the cytoplasm. It catalyses the reaction Endonucleolytic cleavage at a junction such as a reciprocal single-stranded crossover between two homologous DNA duplexes (Holliday junction).. Functionally, the RuvA-RuvB-RuvC complex processes Holliday junction (HJ) DNA during genetic recombination and DNA repair. Endonuclease that resolves HJ intermediates. Cleaves cruciform DNA by making single-stranded nicks across the HJ at symmetrical positions within the homologous arms, yielding a 5'-phosphate and a 3'-hydroxyl group; requires a central core of homology in the junction. The consensus cleavage sequence is 5'-(A/T)TT(C/G)-3'. Cleavage occurs on the 3'-side of the TT dinucleotide at the point of strand exchange. HJ branch migration catalyzed by RuvA-RuvB allows RuvC to scan DNA until it finds its consensus sequence, where it cleaves and resolves the cruciform DNA. The polypeptide is Crossover junction endodeoxyribonuclease RuvC (Finegoldia magna (strain ATCC 29328 / DSM 20472 / WAL 2508) (Peptostreptococcus magnus)).